The chain runs to 244 residues: Proteasome subunit alpha 2 (244 aa).

This sequence belongs to the peptidase T1A family. As to quaternary structure, the 20S proteasome core is composed of 14 alpha and 14 beta subunits that assemble into four stacked heptameric rings, resulting in a barrel-shaped structure. The two inner rings, each composed of seven catalytic beta subunits, are sandwiched by two outer rings, each composed of seven alpha subunits. The catalytic chamber with the active sites is on the inside of the barrel. Has a gated structure, the ends of the cylinder being occluded by the N-termini of the alpha-subunits. Is capped at one or both ends by the proteasome regulatory ATPase, PAN.

The protein localises to the cytoplasm. With respect to regulation, the formation of the proteasomal ATPase PAN-20S proteasome complex, via the docking of the C-termini of PAN into the intersubunit pockets in the alpha-rings, triggers opening of the gate for substrate entry. Interconversion between the open-gate and close-gate conformations leads to a dynamic regulation of the 20S proteasome proteolysis activity. Its function is as follows. Component of the proteasome core, a large protease complex with broad specificity involved in protein degradation. The polypeptide is Proteasome subunit alpha 2 (Haloarcula marismortui (strain ATCC 43049 / DSM 3752 / JCM 8966 / VKM B-1809) (Halobacterium marismortui)).